Consider the following 388-residue polypeptide: Succinate--CoA ligase [ADP-forming] subunit beta (388 aa).

The ATP-grasp domain occupies 9–244 (KQLFAEFGLP…PSQEDKREAH (236 aa)). Residues lysine 46, 53 to 55 (GRG), glutamate 99, serine 102, and glutamate 107 contribute to the ATP site. Residues asparagine 199 and aspartate 213 each coordinate Mg(2+). Residues asparagine 264 and 321 to 323 (GIV) contribute to the substrate site.

It belongs to the succinate/malate CoA ligase beta subunit family. Heterotetramer of two alpha and two beta subunits. Requires Mg(2+) as cofactor.

The enzyme catalyses succinate + ATP + CoA = succinyl-CoA + ADP + phosphate. The catalysed reaction is GTP + succinate + CoA = succinyl-CoA + GDP + phosphate. It functions in the pathway carbohydrate metabolism; tricarboxylic acid cycle; succinate from succinyl-CoA (ligase route): step 1/1. Its function is as follows. Succinyl-CoA synthetase functions in the citric acid cycle (TCA), coupling the hydrolysis of succinyl-CoA to the synthesis of either ATP or GTP and thus represents the only step of substrate-level phosphorylation in the TCA. The beta subunit provides nucleotide specificity of the enzyme and binds the substrate succinate, while the binding sites for coenzyme A and phosphate are found in the alpha subunit. This Vibrio vulnificus (strain YJ016) protein is Succinate--CoA ligase [ADP-forming] subunit beta.